Here is a 205-residue protein sequence, read N- to C-terminus: Thymidylate kinase (205 aa).

ATP is bound at residue 7–14; it reads GIDGSGKT.

This sequence belongs to the thymidylate kinase family.

It carries out the reaction dTMP + ATP = dTDP + ADP. Functionally, phosphorylation of dTMP to form dTDP in both de novo and salvage pathways of dTTP synthesis. This Wolbachia sp. subsp. Brugia malayi (strain TRS) protein is Thymidylate kinase.